The sequence spans 337 residues: 2-ketoarginine methyltransferase (337 aa).

It belongs to the 2-ketoarginine methyltransferase family.

It carries out the reaction 5-guanidino-2-oxopentanoate + S-adenosyl-L-methionine = (3R)-5-guanidino-3-methyl-2-oxopentanoate + S-adenosyl-L-homocysteine + H(+). It participates in antibiotic biosynthesis. Functionally, S-adenosyl-L-methionine-dependent methyltransferase involved in the formation of the rare amino acid 3-methylarginine (MeArg), which is incorporated into the peptidyl nucleoside antibiotic arginomycin. Transfers the methyl group from S-adenosyl-L-methionine into 5-guanidino-2-oxopentanoate acid to yield 5-guanidino-3-methyl-2-oxopentanoate, a precursor of MeArg. The sequence is that of 2-ketoarginine methyltransferase from Streptomyces arginensis.